Consider the following 545-residue polypeptide: Esterase-5B (545 aa).

An N-terminal signal peptide occupies residues 1-19; that stretch reads MYCAKLILLLGCFWISSSA. C84 and C103 are disulfide-bonded. Residue N113 is glycosylated (N-linked (GlcNAc...) asparagine). S207 (acyl-ester intermediate) is an active-site residue. A disulfide bridge connects residues C259 and C271. An N-linked (GlcNAc...) asparagine glycan is attached at N421. The active-site Charge relay system is the H467. N507 carries N-linked (GlcNAc...) asparagine glycosylation. A disulfide bridge links C515 with C536.

This sequence belongs to the type-B carboxylesterase/lipase family. Homodimer.

It localises to the secreted. It carries out the reaction a carboxylic ester + H2O = an alcohol + a carboxylate + H(+). This chain is Esterase-5B (Est-5B), found in Drosophila persimilis (Fruit fly).